A 275-amino-acid chain; its full sequence is Undecaprenyl-diphosphatase (275 aa).

8 helical membrane-spanning segments follow: residues 4–24, 44–64, 85–105, 113–133, 149–169, 188–208, 226–246, and 255–275; these read LNVI…WLPI, AFMD…VVVL, WTLW…GFPL, LMQN…FIVI, TLPW…IIPG, FVGA…VSIL, IILL…IKFL, and FKVF…AMFL.

It belongs to the UppP family.

It is found in the cell membrane. The catalysed reaction is di-trans,octa-cis-undecaprenyl diphosphate + H2O = di-trans,octa-cis-undecaprenyl phosphate + phosphate + H(+). In terms of biological role, catalyzes the dephosphorylation of undecaprenyl diphosphate (UPP). Confers resistance to bacitracin. The protein is Undecaprenyl-diphosphatase of Latilactobacillus sakei subsp. sakei (strain 23K) (Lactobacillus sakei subsp. sakei).